The sequence spans 445 residues: Argininosuccinate synthase (445 aa).

Residues Ala18–Ser26 and Ala44 contribute to the ATP site. Tyr100 lines the L-citrulline pocket. Residues Gly130 and Thr132 each coordinate ATP. The L-aspartate site is built by Thr132, Asn136, and Asp137. L-citrulline is bound at residue Asn136. ATP is bound at residue Asp137. Residues Arg140 and Ser193 each contribute to the L-citrulline site. ATP is bound at residue Asp195. Residues Thr202, Glu204, and Glu281 each coordinate L-citrulline.

This sequence belongs to the argininosuccinate synthase family. Type 2 subfamily. Homotetramer.

Its subcellular location is the cytoplasm. It catalyses the reaction L-citrulline + L-aspartate + ATP = 2-(N(omega)-L-arginino)succinate + AMP + diphosphate + H(+). It participates in amino-acid biosynthesis; L-arginine biosynthesis; L-arginine from L-ornithine and carbamoyl phosphate: step 2/3. The chain is Argininosuccinate synthase (argG) from Pasteurella multocida (strain Pm70).